A 120-amino-acid chain; its full sequence is Large ribosomal subunit protein bL19 (120 aa).

This sequence belongs to the bacterial ribosomal protein bL19 family.

This protein is located at the 30S-50S ribosomal subunit interface and may play a role in the structure and function of the aminoacyl-tRNA binding site. This is Large ribosomal subunit protein bL19 (rplS) from Nostoc sp. (strain PCC 7120 / SAG 25.82 / UTEX 2576).